A 335-amino-acid chain; its full sequence is Biotin synthase (335 aa).

The Radical SAM core domain occupies 43 to 269; that stretch reads YFGKKVKLNM…INPTKEIRIA (227 aa). The [4Fe-4S] cluster site is built by cysteine 61, cysteine 65, and cysteine 68. [2Fe-2S] cluster is bound by residues cysteine 104, cysteine 137, cysteine 197, and arginine 267.

The protein belongs to the radical SAM superfamily. Biotin synthase family. Homodimer. It depends on [4Fe-4S] cluster as a cofactor. The cofactor is [2Fe-2S] cluster.

It catalyses the reaction (4R,5S)-dethiobiotin + (sulfur carrier)-SH + 2 reduced [2Fe-2S]-[ferredoxin] + 2 S-adenosyl-L-methionine = (sulfur carrier)-H + biotin + 2 5'-deoxyadenosine + 2 L-methionine + 2 oxidized [2Fe-2S]-[ferredoxin]. It participates in cofactor biosynthesis; biotin biosynthesis; biotin from 7,8-diaminononanoate: step 2/2. In terms of biological role, catalyzes the conversion of dethiobiotin (DTB) to biotin by the insertion of a sulfur atom into dethiobiotin via a radical-based mechanism. The polypeptide is Biotin synthase (Staphylococcus aureus (strain USA300)).